A 1088-amino-acid polypeptide reads, in one-letter code: Insulin receptor substrate 1-B (1088 aa).

The PH domain occupies 15–117 (DVRKVGYLRK…WYQALVDLHN (103 aa)). Tyr48 is modified (phosphotyrosine). Positions 155 to 259 (FKEVWQVIMK…EAMKALSDEF (105 aa)) constitute an IRS-type PTB domain. The tract at residues 259-428 (FRPRSKSQSS…GGFISSDEYG (170 aa)) is disordered. Composition is skewed to low complexity over residues 264 to 278 (KSQSSSNCSNPISVP), 302 to 312 (SATATSPAGGA), 379 to 400 (SPSATSPVSLSSSSTSGHGSTS), and 408 to 420 (SSASISGSPSDGG). Ser307 carries the phosphoserine modification. A Phosphotyrosine; by INSR modification is found at Tyr460. Residues 460–463 (YICM) carry the YXXM motif 1 motif. 2 stretches are compositionally biased toward polar residues: residues 466–479 (SSSHLQRGPQQRYQ) and 499–516 (SSGTSPPTVSHQKTPSQS). Disordered regions lie at residues 466–485 (SSSHLQRGPQQRYQPSRGEE) and 496–516 (RTHSSGTSPPTVSHQKTPSQS). 5 consecutive short sequence motifs (YXXM motif) follow at residues 521 to 524 (YTEM), 567 to 570 (YMPM), 584 to 587 (YMPM), 612 to 615 (YMMM), and 654 to 657 (YINM). Tyr567 and Tyr584 each carry phosphotyrosine; by INSR. Phosphotyrosine is present on Tyr612. A disordered region spans residues 704 to 785 (NLRISANSGH…PPEPKSPGEY (82 aa)). The span at 707 to 718 (ISANSGHNLYTE) shows a compositional bias: polar residues. Positions 719-729 (DSSSSSTSSDS) are enriched in low complexity. 2 positions are modified to phosphotyrosine; by INSR: Tyr785 and Tyr823. The GRB2-binding stretch occupies residues 785–787 (YVN). Positions 823-826 (YMNM) match the YXXM motif 7 motif. Over residues 840 to 863 (TSSYEPPNKPVNSVCPTETCSSSR) the composition is skewed to polar residues. Positions 840 to 868 (TSSYEPPNKPVNSVCPTETCSSSRPPIRG) are disordered. Tyr875 carries the phosphotyrosine; by INSR modification. 2 consecutive short sequence motifs (YXXM motif) follow at residues 875 to 878 (YMSM) and 909 to 912 (YAEM). The disordered stretch occupies residues 935–1006 (ASRSSLLGQG…SGEDVKRHSS (72 aa)). Polar residues-rich tracts occupy residues 946–961 (GPSAFTRVSLSPNRNP) and 980–995 (ETFSSTPTTARVTTGP). Phosphotyrosine; by INSR occurs at positions 1037 and 1069.

In terms of assembly, interacts with the NPXY motif of tyrosine-phosphorylated igf1r and insr via the PTB domain. Binds to phosphatidylinositol 3-kinase p85 subunit at a low level in vitro prior to phosphorylation. Binding is greatly enhanced following tyrosine phosphorylation by insr and probably occurs via the phosphorylated YXXM motifs. In terms of processing, phosphorylation of Tyr-785 is required for grb2-binding.

Functionally, may mediate the control of various cellular processes by insulin. When phosphorylated by the insulin receptor binds specifically to various cellular proteins containing SH2 domains such as phosphatidylinositol 3-kinase p85 subunit or grb2. Activates phosphatidylinositol 3-kinase when bound to the regulatory p85 subunit. This is Insulin receptor substrate 1-B (irs1-b) from Xenopus laevis (African clawed frog).